Consider the following 170-residue polypeptide: J domain-containing protein (170 aa).

Residues 17–82 (DYYALLGCDE…SKRALYDKWR (66 aa)) form the J domain. A disordered region spans residues 101-170 (QQSMHWSKPN…VISKFRNYEI (70 aa)). A compositionally biased stretch (basic and acidic residues) spans 110–120 (NTKDRMLEGEP). Low complexity-rich tracts occupy residues 121 to 135 (GKPSGPSSLGPSNPG) and 142 to 153 (GGAALWGRWGAG).

This chain is J domain-containing protein (jdp), found in Manduca sexta (Tobacco hawkmoth).